The sequence spans 276 residues: Probable ABC transporter permease protein PH1036 (276 aa).

6 helical membrane-spanning segments follow: residues 12 to 32 (IAWS…MASV), 75 to 95 (IVAI…AYAF), 109 to 129 (FIVL…YFLL), 137 to 157 (TFRG…IFFM), 186 to 206 (IVLP…FTWV), and 241 to 261 (GLLT…YALF). Residues 70 to 261 (LKNSLIVAIP…LVPLLVYALF (192 aa)) form the ABC transmembrane type-1 domain.

This sequence belongs to the binding-protein-dependent transport system permease family. MalFG subfamily.

The protein localises to the cell membrane. Probably part of a binding-protein-dependent transport system PH1036/38/39. Probably responsible for the translocation of the substrate across the membrane. In Pyrococcus horikoshii (strain ATCC 700860 / DSM 12428 / JCM 9974 / NBRC 100139 / OT-3), this protein is Probable ABC transporter permease protein PH1036.